We begin with the raw amino-acid sequence, 243 residues long: Polycomb group RING finger protein 1 (243 aa).

Residue Lys-12 forms a Glycyl lysine isopeptide (Lys-Gly) (interchain with G-Cter in SUMO2) linkage. The RING-type zinc-finger motif lies at 35 to 74 (CCLCAGYFVDATTITECLHTFCKSCIVKYLQTSKYCPMCN). The tract at residues 74–231 (NIKIHETQPL…LSRWFGKPSP (158 aa)) is necessary for repressor activity. Residue Lys-76 forms a Glycyl lysine isopeptide (Lys-Gly) (interchain with G-Cter in SUMO2) linkage. The segment at 138–239 (LPFTSFDHYY…SPLLLQYSVK (102 aa)) is required for the interaction with the KDM2B-SKP1 heterodimeric complex. An RING-finger and WD40-associated ubiquitin-like domain (RAWUL); sufficient for interaction with BCOR and BCORL1 region spans residues 151–239 (EQLSLCLERL…SPLLLQYSVK (89 aa)).

Interacts with BCORL1, forming heterodimers. The PCGF1-BCORL1 heterodimeric complex interacts with the KDM2B-SKP1 heterodimeric complex to form a homotetrameric polycomb repression complex 1 (PRC1.1). Component of the repressive BCOR complex containing a Polycomb group subcomplex at least composed of RYBP, RING1 and RNF2/RING2. Specifically interacts with BCOR, RING1 and RNF2/RING2. Component of a PRC1-like complex. Interacts with CBX6, CBX7 and CBX8. Interacts with DPPA4, NANOG, POU5F1 and RYBP. In terms of tissue distribution, highly expressed in brain, cerebellum, heart and testis.

Its subcellular location is the nucleus. Component of the Polycomb group (PcG) multiprotein BCOR complex, a complex required to maintain the transcriptionally repressive state of some genes, such as BCL6 and the cyclin-dependent kinase inhibitor, CDKN1A. Transcriptional repressor that may be targeted to the DNA by BCL6; this transcription repressor activity may be related to PKC signaling pathway. Represses CDKN1A expression by binding to its promoter, and this repression is dependent on the retinoic acid response element (RARE element). Promotes cell cycle progression and enhances cell proliferation as well. May have a positive role in tumor cell growth by down-regulating CDKN1A. Component of a Polycomb group (PcG) multiprotein PRC1-like complex, a complex class required to maintain the transcriptionally repressive state of many genes, including Hox genes, throughout development. PcG PRC1 complex acts via chromatin remodeling and modification of histones; it mediates monoubiquitination of histone H2A 'Lys-119', rendering chromatin heritably changed in its expressibility. Within the PRC1-like complex, regulates RNF2 ubiquitin ligase activity. Regulates the expression of DPPA4 and NANOG in the NT2 embryonic carcinoma cells. The chain is Polycomb group RING finger protein 1 (Pcgf1) from Rattus norvegicus (Rat).